The sequence spans 628 residues: 1-deoxy-D-xylulose-5-phosphate synthase (628 aa).

Thiamine diphosphate-binding positions include H72 and 113 to 115 (GHS). Mg(2+) is bound at residue D144. Thiamine diphosphate contacts are provided by residues 145 to 146 (GA), N173, Y284, and E363. N173 serves as a coordination point for Mg(2+).

Belongs to the transketolase family. DXPS subfamily. As to quaternary structure, homodimer. It depends on Mg(2+) as a cofactor. Thiamine diphosphate is required as a cofactor.

The catalysed reaction is D-glyceraldehyde 3-phosphate + pyruvate + H(+) = 1-deoxy-D-xylulose 5-phosphate + CO2. It functions in the pathway metabolic intermediate biosynthesis; 1-deoxy-D-xylulose 5-phosphate biosynthesis; 1-deoxy-D-xylulose 5-phosphate from D-glyceraldehyde 3-phosphate and pyruvate: step 1/1. In terms of biological role, catalyzes the acyloin condensation reaction between C atoms 2 and 3 of pyruvate and glyceraldehyde 3-phosphate to yield 1-deoxy-D-xylulose-5-phosphate (DXP). The protein is 1-deoxy-D-xylulose-5-phosphate synthase of Brevibacillus brevis (strain 47 / JCM 6285 / NBRC 100599).